We begin with the raw amino-acid sequence, 162 residues long: Shikimate kinase (162 aa).

11–16 serves as a coordination point for ATP; the sequence is GSGKSS. A Mg(2+)-binding site is contributed by Ser-15. Substrate-binding residues include Asp-33, Arg-57, and Gly-80. Residue Arg-116 participates in ATP binding. Arg-132 is a substrate binding site.

Belongs to the shikimate kinase family. As to quaternary structure, monomer. It depends on Mg(2+) as a cofactor.

It localises to the cytoplasm. The enzyme catalyses shikimate + ATP = 3-phosphoshikimate + ADP + H(+). The protein operates within metabolic intermediate biosynthesis; chorismate biosynthesis; chorismate from D-erythrose 4-phosphate and phosphoenolpyruvate: step 5/7. In terms of biological role, catalyzes the specific phosphorylation of the 3-hydroxyl group of shikimic acid using ATP as a cosubstrate. The chain is Shikimate kinase from Helicobacter pylori (strain G27).